A 233-amino-acid chain; its full sequence is Small ribosomal subunit protein uS2 (233 aa).

This sequence belongs to the universal ribosomal protein uS2 family.

This Clostridium acetobutylicum (strain ATCC 824 / DSM 792 / JCM 1419 / IAM 19013 / LMG 5710 / NBRC 13948 / NRRL B-527 / VKM B-1787 / 2291 / W) protein is Small ribosomal subunit protein uS2.